The chain runs to 43 residues: Protein PsbN (43 aa).

The helical transmembrane segment at 5 to 27 threads the bilayer; it reads TLVAIFISCSLVSFTGYALYTAF.

Belongs to the PsbN family.

The protein resides in the plastid. It is found in the chloroplast thylakoid membrane. In terms of biological role, may play a role in photosystem I and II biogenesis. This chain is Protein PsbN, found in Exsertotheca crispa (Moss).